The sequence spans 67 residues: Large ribosomal subunit protein bL31 (67 aa).

Cys16, Cys18, Cys38, and Cys41 together coordinate Zn(2+).

Belongs to the bacterial ribosomal protein bL31 family. Type A subfamily. In terms of assembly, part of the 50S ribosomal subunit. Zn(2+) serves as cofactor.

Functionally, binds the 23S rRNA. The polypeptide is Large ribosomal subunit protein bL31 (Thioalkalivibrio sulfidiphilus (strain HL-EbGR7)).